A 316-amino-acid chain; its full sequence is Coproporphyrin III ferrochelatase (316 aa).

Residues Tyr-13, Arg-30, 46 to 47 (RY), Ser-54, and Tyr-125 contribute to the Fe-coproporphyrin III site. Residues His-183 and Glu-264 each contribute to the Fe(2+) site.

This sequence belongs to the ferrochelatase family.

It is found in the cytoplasm. The catalysed reaction is Fe-coproporphyrin III + 2 H(+) = coproporphyrin III + Fe(2+). It participates in porphyrin-containing compound metabolism; protoheme biosynthesis. Involved in coproporphyrin-dependent heme b biosynthesis. Catalyzes the insertion of ferrous iron into coproporphyrin III to form Fe-coproporphyrin III. The chain is Coproporphyrin III ferrochelatase from Geobacillus kaustophilus (strain HTA426).